A 489-amino-acid chain; its full sequence is N-succinylglutamate 5-semialdehyde dehydrogenase (489 aa).

Glycine 216–glycine 221 is an NAD(+) binding site. Catalysis depends on residues glutamate 239 and cysteine 273.

Belongs to the aldehyde dehydrogenase family. AstD subfamily.

It carries out the reaction N-succinyl-L-glutamate 5-semialdehyde + NAD(+) + H2O = N-succinyl-L-glutamate + NADH + 2 H(+). It functions in the pathway amino-acid degradation; L-arginine degradation via AST pathway; L-glutamate and succinate from L-arginine: step 4/5. In terms of biological role, catalyzes the NAD-dependent reduction of succinylglutamate semialdehyde into succinylglutamate. This Erwinia tasmaniensis (strain DSM 17950 / CFBP 7177 / CIP 109463 / NCPPB 4357 / Et1/99) protein is N-succinylglutamate 5-semialdehyde dehydrogenase.